The primary structure comprises 290 residues: 4-hydroxybenzoate octaprenyltransferase (290 aa).

A run of 8 helical transmembrane segments spans residues 23–43 (IGAL…TPGM), 46–66 (LWIL…GCVV), 99–119 (LFVV…AMTI), 141–161 (LPQV…FAAV), 163–183 (ESLP…AVAY), 212–232 (TLII…IGWL), 233–253 (NGLG…FVYQ), and 268–288 (AFMN…MSYW).

The protein belongs to the UbiA prenyltransferase family. Mg(2+) is required as a cofactor.

The protein localises to the cell inner membrane. It carries out the reaction all-trans-octaprenyl diphosphate + 4-hydroxybenzoate = 4-hydroxy-3-(all-trans-octaprenyl)benzoate + diphosphate. The protein operates within cofactor biosynthesis; ubiquinone biosynthesis. Catalyzes the prenylation of para-hydroxybenzoate (PHB) with an all-trans polyprenyl group. Mediates the second step in the final reaction sequence of ubiquinone-8 (UQ-8) biosynthesis, which is the condensation of the polyisoprenoid side chain with PHB, generating the first membrane-bound Q intermediate 3-octaprenyl-4-hydroxybenzoate. The protein is 4-hydroxybenzoate octaprenyltransferase of Salmonella paratyphi C (strain RKS4594).